We begin with the raw amino-acid sequence, 336 residues long: Holliday junction branch migration complex subunit RuvB (336 aa).

The large ATPase domain (RuvB-L) stretch occupies residues M1–Y182. Residues L21, R22, G63, K66, T67, S68, E129 to F131, R172, Y182, and R219 contribute to the ATP site. T67 provides a ligand contact to Mg(2+). The interval S183–G253 is small ATPAse domain (RuvB-S). The head domain (RuvB-H) stretch occupies residues E256–F336. Residues R310 and R315 each coordinate DNA.

This sequence belongs to the RuvB family. Homohexamer. Forms an RuvA(8)-RuvB(12)-Holliday junction (HJ) complex. HJ DNA is sandwiched between 2 RuvA tetramers; dsDNA enters through RuvA and exits via RuvB. An RuvB hexamer assembles on each DNA strand where it exits the tetramer. Each RuvB hexamer is contacted by two RuvA subunits (via domain III) on 2 adjacent RuvB subunits; this complex drives branch migration. In the full resolvosome a probable DNA-RuvA(4)-RuvB(12)-RuvC(2) complex forms which resolves the HJ.

Its subcellular location is the cytoplasm. The catalysed reaction is ATP + H2O = ADP + phosphate + H(+). Functionally, the RuvA-RuvB-RuvC complex processes Holliday junction (HJ) DNA during genetic recombination and DNA repair, while the RuvA-RuvB complex plays an important role in the rescue of blocked DNA replication forks via replication fork reversal (RFR). RuvA specifically binds to HJ cruciform DNA, conferring on it an open structure. The RuvB hexamer acts as an ATP-dependent pump, pulling dsDNA into and through the RuvAB complex. RuvB forms 2 homohexamers on either side of HJ DNA bound by 1 or 2 RuvA tetramers; 4 subunits per hexamer contact DNA at a time. Coordinated motions by a converter formed by DNA-disengaged RuvB subunits stimulates ATP hydrolysis and nucleotide exchange. Immobilization of the converter enables RuvB to convert the ATP-contained energy into a lever motion, pulling 2 nucleotides of DNA out of the RuvA tetramer per ATP hydrolyzed, thus driving DNA branch migration. The RuvB motors rotate together with the DNA substrate, which together with the progressing nucleotide cycle form the mechanistic basis for DNA recombination by continuous HJ branch migration. Branch migration allows RuvC to scan DNA until it finds its consensus sequence, where it cleaves and resolves cruciform DNA. The chain is Holliday junction branch migration complex subunit RuvB from Helicobacter pylori (strain J99 / ATCC 700824) (Campylobacter pylori J99).